A 595-amino-acid polypeptide reads, in one-letter code: Aspartate--tRNA(Asp/Asn) ligase (595 aa).

L-aspartate is bound at residue Glu-171. Residues 195–198 (QLFK) form an aspartate region. Residue Arg-217 participates in L-aspartate binding. ATP contacts are provided by residues 217–219 (RDE) and Gln-226. Residue His-454 coordinates L-aspartate. An ATP-binding site is contributed by Glu-488. Arg-495 serves as a coordination point for L-aspartate. 540-543 (GLDR) serves as a coordination point for ATP.

The protein belongs to the class-II aminoacyl-tRNA synthetase family. Type 1 subfamily. As to quaternary structure, homodimer.

Its subcellular location is the cytoplasm. The catalysed reaction is tRNA(Asx) + L-aspartate + ATP = L-aspartyl-tRNA(Asx) + AMP + diphosphate. In terms of biological role, aspartyl-tRNA synthetase with relaxed tRNA specificity since it is able to aspartylate not only its cognate tRNA(Asp) but also tRNA(Asn). Reaction proceeds in two steps: L-aspartate is first activated by ATP to form Asp-AMP and then transferred to the acceptor end of tRNA(Asp/Asn). In Bordetella petrii (strain ATCC BAA-461 / DSM 12804 / CCUG 43448), this protein is Aspartate--tRNA(Asp/Asn) ligase.